We begin with the raw amino-acid sequence, 874 residues long: Alanine--tRNA ligase (874 aa).

Zn(2+) is bound by residues histidine 562, histidine 566, cysteine 664, and histidine 668.

Belongs to the class-II aminoacyl-tRNA synthetase family. The cofactor is Zn(2+).

The protein localises to the cytoplasm. It carries out the reaction tRNA(Ala) + L-alanine + ATP = L-alanyl-tRNA(Ala) + AMP + diphosphate. In terms of biological role, catalyzes the attachment of alanine to tRNA(Ala) in a two-step reaction: alanine is first activated by ATP to form Ala-AMP and then transferred to the acceptor end of tRNA(Ala). Also edits incorrectly charged Ser-tRNA(Ala) and Gly-tRNA(Ala) via its editing domain. The sequence is that of Alanine--tRNA ligase from Neisseria gonorrhoeae (strain ATCC 700825 / FA 1090).